Here is a 172-residue protein sequence, read N- to C-terminus: Translation initiation factor IF-3 (172 aa).

This sequence belongs to the IF-3 family. As to quaternary structure, monomer.

It is found in the cytoplasm. IF-3 binds to the 30S ribosomal subunit and shifts the equilibrium between 70S ribosomes and their 50S and 30S subunits in favor of the free subunits, thus enhancing the availability of 30S subunits on which protein synthesis initiation begins. The protein is Translation initiation factor IF-3 of Geobacillus stearothermophilus (Bacillus stearothermophilus).